A 292-amino-acid polypeptide reads, in one-letter code: MAAITASMVAELRAKTDAPMMECKKALTEADGDLGKAEELLRVKLGNKASKAASRVTAEGIVVSYIDGTTGALVELNCETDFVSKNDDFLGFGAKVAELVAKQNPADVAVLSALEMDGSTVDAVRSALIGKIGENMTIRRFVRYTNGGKLVSYLHGTRIGVMVEFDGDEAAAKDVAMHVAAMKPVSLSADQVPAELIAKERSIAEQKAAESGKPAEIVAKMVEGSVQKYLKEVSLLNQSFVKNDKQTVEQMLKGVNTTVKGFTLYVVGEGIEKKQDDFAAEVAAQVAAAQKA.

The involved in Mg(2+) ion dislocation from EF-Tu stretch occupies residues 80-83; the sequence is TDFV.

Belongs to the EF-Ts family.

Its subcellular location is the cytoplasm. Its function is as follows. Associates with the EF-Tu.GDP complex and induces the exchange of GDP to GTP. It remains bound to the aminoacyl-tRNA.EF-Tu.GTP complex up to the GTP hydrolysis stage on the ribosome. The protein is Elongation factor Ts of Cupriavidus metallidurans (strain ATCC 43123 / DSM 2839 / NBRC 102507 / CH34) (Ralstonia metallidurans).